A 49-amino-acid polypeptide reads, in one-letter code: Large ribosomal subunit protein bL33 (49 aa).

It belongs to the bacterial ribosomal protein bL33 family.

The polypeptide is Large ribosomal subunit protein bL33 (Syntrophotalea carbinolica (strain DSM 2380 / NBRC 103641 / GraBd1) (Pelobacter carbinolicus)).